The chain runs to 217 residues: MIRVNNVCKKYHTNSGWKTVLKNINFELQKGEKIGILGRNGAGKSTLIRLMSGVEPPTSGTIERSMSISWPLAFSGAFQGSLTGMDNLRFICRLYDVDPDYVTRFTKEFSELGDYLYEPVKKYSSGMKARLAFALSLSVEFDCYLIDEVIAVGDSRFAEKCKYELFEKRKDRSIILVSHSPSAMKSYCDNAVVLENGIMHHFEDMDKAYQYYNETQK.

The region spanning 2–217 (IRVNNVCKKY…AYQYYNETQK (216 aa)) is the ABC transporter domain. ATP is bound at residue 38–45 (GRNGAGKS).

This sequence belongs to the ABC transporter superfamily.

It is found in the cell inner membrane. In terms of biological role, putative ATP-binding protein, and an energy-coupling component of capsule polysaccharide export apparatus. The protein is ATP-binding protein BexA (bexA) of Haemophilus influenzae.